The primary structure comprises 61 residues: Photosystem II reaction center protein K (61 aa).

The propeptide occupies 1–24; that stretch reads MLNIFSLICICLNSVLYSSSFFVA. A helical membrane pass occupies residues 40–60; that stretch reads MPVIPVLFFLLAFVWQAAVSF.

The protein belongs to the PsbK family. In terms of assembly, PSII is composed of 1 copy each of membrane proteins PsbA, PsbB, PsbC, PsbD, PsbE, PsbF, PsbH, PsbI, PsbJ, PsbK, PsbL, PsbM, PsbT, PsbX, PsbY, PsbZ, Psb30/Ycf12, at least 3 peripheral proteins of the oxygen-evolving complex and a large number of cofactors. It forms dimeric complexes.

It localises to the plastid. The protein resides in the chloroplast thylakoid membrane. One of the components of the core complex of photosystem II (PSII). PSII is a light-driven water:plastoquinone oxidoreductase that uses light energy to abstract electrons from H(2)O, generating O(2) and a proton gradient subsequently used for ATP formation. It consists of a core antenna complex that captures photons, and an electron transfer chain that converts photonic excitation into a charge separation. The chain is Photosystem II reaction center protein K from Morus indica (Mulberry).